The sequence spans 482 residues: Abscisic acid 8'-hydroxylase 2 (482 aa).

The helical transmembrane segment at 20 to 40 (PALITLTIVVVVVVLLFKWWL) threads the bilayer. Residue Cys-431 coordinates heme.

The protein belongs to the cytochrome P450 family. It depends on heme as a cofactor. As to expression, mainly expressed in dry seeds. Lower expression in rosette leaves, flowers, siliques and stems. Not expressed in roots. Expressed in both endosperm and vascular tissues of embryo during the seed development and in cortex and endodermis in germinating embryo.

It localises to the membrane. The enzyme catalyses 2-cis-(+)-abscisate + reduced [NADPH--hemoprotein reductase] + O2 = (+)-8'-hydroxyabscisate + oxidized [NADPH--hemoprotein reductase] + H2O + H(+). Its pathway is plant hormone degradation; abscisic acid degradation. Its function is as follows. Involved in the oxidative degradation of abscisic acid, but not in the isomerization of the produced 8'-hydroxyabscisic acid (8'-OH-ABA) to (-)-phaseic acid (PA). Involved in the control of seed dormancy and germination. The polypeptide is Abscisic acid 8'-hydroxylase 2 (CYP707A2) (Arabidopsis thaliana (Mouse-ear cress)).